The primary structure comprises 468 residues: Tapasin-related protein (468 aa).

The signal sequence occupies residues 1–18 (MGTQEGWCLLLCLALSGA). Over 19–405 (AETKPHPAEG…STQVVPPERR (387 aa)) the chain is Lumenal. Positions 181–297 (PQGTVRTAVE…SLYRAQQIIQ (117 aa)) constitute an Ig-like V-type domain. 2 disulfide bridges follow: cysteine 212–cysteine 283 and cysteine 321–cysteine 382. In terms of domain architecture, Ig-like C1-type spans 304–394 (PKVRLSLANE…THISLEEPLG (91 aa)). The chain crosses the membrane as a helical span at residues 406 to 426 (TALGVIFASSLFLLALMFLGL). At 427–468 (QRRQAPTGLGLLQAERWETTSCADTQSSHLHEDRTARVSQPS) the chain is on the cytoplasmic side. The tract at residues 449-468 (ADTQSSHLHEDRTARVSQPS) is disordered.

As to quaternary structure, interacts with peptide-free HLA-A*02-B2M complexes or those loaded with low affinity peptides, likely facilitating peptide exchange onto higher affinity peptides. Interacts with MR1 in a ligand-independent way; this interaction may stabilize MR1 pool and facilitate ligand loading and dissociation.

The protein localises to the cell membrane. The protein resides in the endoplasmic reticulum membrane. Its subcellular location is the microsome membrane. It localises to the golgi apparatus membrane. In terms of biological role, component of the antigen processing and presentation pathway, which binds to MHC class I coupled with beta2-microglobulin/B2M. Association between TAPBPR and MHC class I occurs in the absence of a functional peptide-loading complex (PLC). In Homo sapiens (Human), this protein is Tapasin-related protein (TAPBPL).